The sequence spans 506 residues: Histone deacetylase complex subunit CTI6 (506 aa).

The tract at residues 49-71 (EESVKQEDVPMEGGEGEVEEEEG) is disordered. The segment covering 62 to 71 (GEGEVEEEEG) has biased composition (acidic residues). The PHD-type zinc finger occupies 72 to 123 (ETRCICGELDTPDDSGFFIQCEQCSSWQHGYCVSITQDNAPDKYWCEQCRPE). The disordered stretch occupies residues 138–425 (IYKPVQEKRR…KPRLPPQRTS (288 aa)). T174 carries the phosphothreonine modification. Residue S175 is modified to Phosphoserine. The residue at position 177 (T177) is a Phosphothreonine. Positions 179 to 195 (DNVDDIGDEEDEVEDEA) are enriched in acidic residues. Phosphoserine is present on residues S216 and S267. 2 stretches are compositionally biased toward basic and acidic residues: residues 231–271 (DSDK…HQED) and 312–342 (DDMK…EKES). Basic residues predominate over residues 373 to 393 (ASSRGSKRVSKPARKGNRTRR). Polar residues predominate over residues 394-404 (SNTSSDTNQNR). Basic and acidic residues predominate over residues 405–415 (RSADIGTDKPV).

In terms of assembly, component of the RPD3C(L) complex composed of at least ASH1, CTI6, DEP1, PHO23, RPD3, RXT2, RXT3, SAP30, SDS3, SIN3, UME1 and UME6. Interacts with CYC8.

The protein localises to the nucleus. Its function is as follows. Component of the RPD3C(L) histone deacetylase complex (HDAC). Responsible for the deacetylation of lysine residues on the N-terminal part of the core histones (H2A, H2B, H3 and H4). Histone deacetylation gives a tag for epigenetic repression and plays an important role in transcriptional regulation, cell cycle progression and developmental events. CTI6 links the SAGA coactivator to the CYC8-TUP1 corepressor. Involved in transcription regulation of heme-regulated genes and required for GCN5 recruitment, histone H3 acetylation and SPT15/TBP binding to promoters. This is Histone deacetylase complex subunit CTI6 (CTI6) from Saccharomyces cerevisiae (strain ATCC 204508 / S288c) (Baker's yeast).